Consider the following 247-residue polypeptide: Probable transcriptional regulatory protein LAF_0541 (247 aa).

Residues 1–22 (MSGHSKWHNIQGRKNAQDAKRG) are disordered.

It belongs to the TACO1 family.

The protein localises to the cytoplasm. The sequence is that of Probable transcriptional regulatory protein LAF_0541 from Limosilactobacillus fermentum (strain NBRC 3956 / LMG 18251) (Lactobacillus fermentum).